The sequence spans 313 residues: Pyrimidine-specific ribonucleoside hydrolase RihB (313 aa).

The active-site Proton acceptor is Asp-11. Positions 11, 16, and 124 each coordinate Ca(2+). Substrate-binding residues include Gln-227 and His-239. Asp-240 contributes to the Ca(2+) binding site.

Belongs to the IUNH family. RihB subfamily. In terms of assembly, homotetramer. Ca(2+) is required as a cofactor.

It carries out the reaction a pyrimidine ribonucleoside + H2O = a pyrimidine nucleobase + D-ribose. Its function is as follows. Hydrolyzes cytidine or uridine to ribose and cytosine or uracil, respectively. Has a clear preference for cytidine over uridine. Strictly specific for ribonucleosides. In Escherichia coli O17:K52:H18 (strain UMN026 / ExPEC), this protein is Pyrimidine-specific ribonucleoside hydrolase RihB.